Consider the following 2725-residue polypeptide: Teneurin-1 (2725 aa).

Residues 1-48 (MEQTDCKPYQPLPKVKHEMDLAYTSSSDESEDGRKPRQSYNSRETLHE) are disordered. In terms of domain architecture, Teneurin N-terminal spans 1 to 318 (MEQTDCKPYQ…KPYRCCNWKC (318 aa)). Topologically, residues 1–324 (MEQTDCKPYQ…NWKCTALSAT (324 aa)) are cytoplasmic. Positions 62–65 (RKRK) match the Nuclear localization signal (NLS) motif. Phosphoserine is present on Ser105. Residue Thr109 is modified to Phosphothreonine. Position 116 is a phosphoserine (Ser116). The segment covering 174–189 (AGSTQDVQSSPHNQFT) has biased composition (polar residues). The tract at residues 174-241 (AGSTQDVQSS…PAPPTSTQDS (68 aa)) is disordered. Positions 192–201 (PLPPPPPPPH) are enriched in pro residues. Residues 290–297 (PPPRPLPR) carry the Required for interaction with SORBS1 (Ten-1 ICD form) motif. The chain crosses the membrane as a helical span at residues 325–345 (AITVTLALLLAYVIAVHLFGL). Residues 346 to 2725 (TWQLQPVEGE…FMRQSEIGRR (2380 aa)) are Extracellular-facing. Asn433 is a glycosylation site (N-linked (GlcNAc...) asparagine). EGF-like domains lie at 528 to 559 (IMDD…PDCA), 560 to 591 (RDSC…ECDV), 592 to 624 (PEEQ…EICE), 625 to 657 (EEDC…NCET), 658 to 691 (PLPV…SDCS), 692 to 721 (TELC…GPTC), 722 to 753 (EERS…DHCT), and 761 to 796 (VRDG…TGCN). Disulfide bonds link Cys532-Cys542, Cys536-Cys547, Cys549-Cys558, Cys567-Cys578, Cys580-Cys589, Cys596-Cys607, Cys601-Cys612, Cys614-Cys623, Cys628-Cys639, Cys633-Cys644, Cys646-Cys655, Cys666-Cys679, Cys681-Cys690, Cys695-Cys705, Cys699-Cys710, Cys712-Cys721, Cys726-Cys736, Cys730-Cys741, Cys743-Cys752, Cys765-Cys775, Cys769-Cys784, and Cys786-Cys795. Residues Asn905 and Asn1084 are each glycosylated (N-linked (GlcNAc...) asparagine). NHL repeat units follow at residues 1194-1219 (LFAP…VRRI), 1292-1336 (SHCG…NAVI), 1351-1402 (LSCD…IAGR), 1414-1458 (FLVS…VTTN), and 1481-1524 (CFSG…ISRN). The stretch at 1534–1553 (YEIASPADQELYQFTVNGTH) is one YD 1 repeat. Asn1550 and Asn1567 each carry an N-linked (GlcNAc...) asparagine glycan. YD repeat units lie at residues 1570–1590 (YNSE…VHIR), 1608–1632 (YWLT…ALMT), 1633–1654 (YPGN…TVYE), and 1655–1675 (YDPE…SSFH). N-linked (GlcNAc...) asparagine glycans are attached at residues Asn1663, Asn1699, Asn1757, Asn1781, and Asn1842. YD repeat units follow at residues 1845–1864 (YSPS…EKME), 1865–1885 (YDQS…WSYT), 1886–1904 (YLEK…YIFE), 1905–1925 (YDQP…HSLQ), 1933–1949 (YRNI…FIQD), 1950–1969 (YSRD…RRVL), 1970–1989 (YKYT…TQVT), 1992–2012 (YEES…FICT), 2015–2035 (YRQT…EGLV), 2085–2105 (YDLN…FSAN), and 2113–2133 (YEIL…VGRM). Residue Asn2145 is glycosylated (N-linked (GlcNAc...) asparagine). YD repeat units follow at residues 2153–2173 (YDAD…WRYS), 2174–2194 (YDLN…LTPL), 2196–2216 (YDLR…DEDG), 2228–2248 (YNSN…TVQY), and 2250–2270 (YDGL…LQFF). Residue Asn2285 is glycosylated (N-linked (GlcNAc...) asparagine). YD repeat units lie at residues 2296–2313 (YDLQ…GEEY) and 2314–2337 (YVAC…IKEI). The residue at position 2580 (Ser2580) is a Phosphoserine. Residue Asn2602 is glycosylated (N-linked (GlcNAc...) asparagine).

Belongs to the tenascin family. Teneurin subfamily. In terms of assembly, homodimer; disulfide-linked. Heterodimer with either TENM2 or TENM3. May also form heterodimer with TENM4. Ten-1 ICD interacts with SORBS1 (via third SH3 domain). Interacts with MBD1. Ten-1 ICD interacts with HINT1. Post-translationally, derives from the plasma membrane form by proteolytic processing. Further proteolytic cleavage may be generated. In terms of tissue distribution, expressed in fetal brain.

It is found in the cell membrane. The protein resides in the nucleus. It localises to the nucleus speckle. The protein localises to the nucleus matrix. Its subcellular location is the cytoplasm. It is found in the cytoskeleton. Its function is as follows. Involved in neural development, regulating the establishment of proper connectivity within the nervous system. May function as a cellular signal transducer. Plays a role in the regulation of neuroplasticity in the limbic system. Mediates a rapid reorganization of actin- and tubulin-based cytoskeleton elements with an increase in dendritic arborization and spine density formation of neurons in the hippocampus and amygdala. Induces BDNF transcription inhibition in neurons. Activates the mitogen-activated protein (MAP) kinase 2 (MEK2) and extracellular signal-regulated kinase (ERK) cascade. Also acts as a bioactive neuroprotective peptide on limbic neurons of the brain and regulates stress-induced behavior: attenuates alkalosis-associated necrotic cell death and the effects of corticotropin-releasing factor (CRF) on c-fos/FOS induction and on the reinstatement of cocaine seeking. In terms of biological role, induces gene transcription activation. In Homo sapiens (Human), this protein is Teneurin-1 (TENM1).